Reading from the N-terminus, the 316-residue chain is D-alanine--D-alanine ligase (316 aa).

The region spanning 129-316 (KYILQAAGIP…ALQAEFCRYP (188 aa)) is the ATP-grasp domain. 162–217 (EGSLLYPMFIKPANMGSSVGITKAENREELQNALQEAYRYDTRAIVEQGIEAREIE) is an ATP binding site. Mg(2+) is bound by residues Asp-288, Glu-301, and Asn-303.

It belongs to the D-alanine--D-alanine ligase family. Mg(2+) is required as a cofactor. It depends on Mn(2+) as a cofactor.

Its subcellular location is the cytoplasm. The catalysed reaction is 2 D-alanine + ATP = D-alanyl-D-alanine + ADP + phosphate + H(+). Its pathway is cell wall biogenesis; peptidoglycan biosynthesis. Cell wall formation. This Enterococcus gallinarum protein is D-alanine--D-alanine ligase (ddl).